The chain runs to 156 residues: Protein Smg homolog (156 aa).

It belongs to the Smg family.

This is Protein Smg homolog from Halorhodospira halophila (strain DSM 244 / SL1) (Ectothiorhodospira halophila (strain DSM 244 / SL1)).